We begin with the raw amino-acid sequence, 413 residues long: Divalent metal cation transporter MntH (413 aa).

The Cytoplasmic portion of the chain corresponds to 1–19; the sequence is MTDNRVENSSGRAARKLRL. Residues 20–39 form a helical membrane-spanning segment; sequence ALMGPAFIAAIGYIDPGNFA. At 40–51 the chain is on the periplasmic side; that stretch reads TNIQAGASFGYQ. Residues 52 to 71 traverse the membrane as a helical segment; sequence LLWVVVWANLMAMLIQILSA. The Cytoplasmic portion of the chain corresponds to 72–95; that stretch reads KLGIATGKNLAEQIRDHYPRPVVW. A helical membrane pass occupies residues 96-118; that stretch reads FYWVQAEIIAMATDLAEFIGAAI. At 119 to 125 the chain is on the periplasmic side; the sequence is GFKLILG. The helical transmembrane segment at 126-145 threads the bilayer; the sequence is VSLLQGAVLTGIATFLILML. The Cytoplasmic segment spans residues 146-155; that stretch reads QRRGQKPLEK. The chain crosses the membrane as a helical span at residues 156–175; the sequence is VIGGLLLFVAAAYIVELFFS. Topologically, residues 176 to 196 are periplasmic; the sequence is QPDMAQLGKGMVIPALPNPEA. A helical membrane pass occupies residues 197–220; that stretch reads VFLAAGVLGATIMPHVIYLHSSLT. Topologically, residues 221–238 are cytoplasmic; that stretch reads QHLHGGTRQQRYSATKWD. A helical membrane pass occupies residues 239–258; it reads VAIAMTIAGFVNLAMMATAA. Residues 259–276 are Periplasmic-facing; the sequence is AAFHFSGHTGIADLDQAY. The chain crosses the membrane as a helical span at residues 277-297; the sequence is LTLEPLLSHAAATVFGLSLVA. Residues 298-327 lie on the Cytoplasmic side of the membrane; the sequence is AGLSSTVVGTLAGQVVMQGFVRFHIPLWVR. Residues 328-344 form a helical membrane-spanning segment; that stretch reads RSITMLPSFIVILMGLD. The Periplasmic segment spans residues 345–350; it reads PTRILV. The helical transmembrane segment at 351–370 threads the bilayer; the sequence is MSQVLLSFGIALALVPLLIF. Residues 371-387 lie on the Cytoplasmic side of the membrane; the sequence is TSNATLMGELVNTRRVK. The chain crosses the membrane as a helical span at residues 388–406; the sequence is QIGWIIVVLVVALNIWLLV. Over 407 to 413 the chain is Periplasmic; the sequence is GTVMGLS.

It belongs to the NRAMP family.

Its subcellular location is the cell inner membrane. Its function is as follows. H(+)-stimulated, divalent metal cation uptake system. The sequence is that of Divalent metal cation transporter MntH from Salmonella gallinarum (strain 287/91 / NCTC 13346).